A 398-amino-acid polypeptide reads, in one-letter code: Cathepsin E (398 aa).

The N-terminal stretch at 1-21 (MKPLFVLLLLLLLLDLAQAQG) is a signal peptide. Residues 22–58 (VLHRVPLRRHQSLRKKLRAQGQLSDFWRSHNLDMIEF) constitute a propeptide, activation peptide. One can recognise a Peptidase A1 domain in the interval 80–394 (YFGTVSIGSP…DRGNNQVGLA (315 aa)). N92 is a glycosylation site (N-linked (GlcNAc...) asparagine). The active site involves D98. Disulfide bonds link C111-C116 and C274-C278. The active site involves D283.

This sequence belongs to the peptidase A1 family. As to quaternary structure, homodimer; disulfide-linked. Post-translationally, glycosylated. The nature of the carbohydrate chain varies between cell types. In brain microglia, the proenzyme contains a high mannose-type oligosaccharide, while the mature enzyme contains a complex-type oligosaccharide. In stomach and spleen, the mature enzyme contains a high mannose-type oligosaccharide. In erythrocyte membranes, the mature enzyme contains a complex-type oligosaccharide. As to expression, expressed abundantly in lymphocytes and macrophages of the thymus and spleen, and in the M cells of the intestine. In the brain, expression is limited to reactive microglial cells, the large pyrimidial neurons in the cerebral cortex, the CA1 and CA3 pyrimidial neurons of the hippocampus, the large neurons of the neostriatum, and the Purkinje neurons of the cerebellum.

It localises to the endosome. The catalysed reaction is Similar to cathepsin D, but slightly broader specificity.. Functionally, may have a role in immune function. Probably involved in the processing of antigenic peptides during MHC class II-mediated antigen presentation. May play a role in activation-induced lymphocyte depletion in the thymus, and in neuronal degeneration and glial cell activation in the brain. This chain is Cathepsin E (Ctse), found in Rattus norvegicus (Rat).